The following is a 1939-amino-acid chain: Myosin-1 (1939 aa).

The 50-residue stretch at 33–82 folds into the Myosin N-terminal SH3-like domain; the sequence is DAKTSVFVVDPKESFVKATVQSREGGKVTAKTEAGATVTVKDDQVFPMNP. 2 positions are modified to phosphothreonine: T64 and T69. Residues 86-782 form the Myosin motor domain; that stretch reads DKIEDMAMMT…LLGLLEEMRD (697 aa). The residue at position 130 (K130) is an N6,N6,N6-trimethyllysine. 179–186 is an ATP binding site; sequence GESGAGKT. Y389 carries the phosphotyrosine modification. Position 419 is a phosphothreonine (T419). Y424 carries the post-translational modification Phosphotyrosine. Residues 659–681 form an actin-binding region; that stretch reads LNKLMTNLRSTHPHFVRCIIPNE. At H757 the chain carries Pros-methylhistidine. An actin-binding region spans residues 761-775; it reads KFGHTKVFFKAGLLG. The region spanning 785-814 is the IQ domain; the sequence is LAQLITRTQAMCRGFLARVEYQKMVERRES. Residues 843-1939 are a coiled coil; it reads LLKSAETEKE…EVHTKIISEE (1097 aa). A phosphoserine mark is found at S1092, S1096, S1162, and S1237. T1241 carries the post-translational modification Phosphothreonine. A phosphoserine mark is found at S1243 and S1261. A phosphothreonine mark is found at T1265 and T1286. 4 positions are modified to phosphoserine: S1288, S1292, S1303, and S1306. T1467 bears the Phosphothreonine mark. Residue S1474 is modified to Phosphoserine. Y1492 is subject to Phosphotyrosine. A Phosphoserine modification is found at S1495. T1501 is subject to Phosphothreonine. Residue S1514 is modified to Phosphoserine. T1517 bears the Phosphothreonine mark. S1542, S1554, S1574, S1600, S1603, S1714, and S1726 each carry phosphoserine. 2 positions are modified to phosphothreonine: T1730 and T1736. At S1739 the chain carries Phosphoserine.

The protein belongs to the TRAFAC class myosin-kinesin ATPase superfamily. Myosin family. In terms of assembly, muscle myosin is a hexameric protein that consists of 2 heavy chain subunits (MHC), 2 alkali light chain subunits (MLC) and 2 regulatory light chain subunits (MLC-2). Interacts with SLC26A5.

Its subcellular location is the cytoplasm. The protein resides in the myofibril. In terms of biological role, required for normal hearing. It plays a role in cochlear amplification of auditory stimuli, likely through the positive regulation of prestin (SLC26A5) activity and outer hair cell (OHC) electromotility. The polypeptide is Myosin-1 (Homo sapiens (Human)).